A 325-amino-acid chain; its full sequence is Anthranilate phosphoribosyltransferase (325 aa).

Residues glycine 73, 76-77, threonine 81, 83-86, 100-108, and serine 112 contribute to the 5-phospho-alpha-D-ribose 1-diphosphate site; these read GD, NIST, and KHGNVSITS. Anthranilate is bound at residue glycine 73. Serine 85 contributes to the Mg(2+) binding site. Residue asparagine 103 coordinates anthranilate. Arginine 158 is an anthranilate binding site. Residues aspartate 216 and glutamate 217 each contribute to the Mg(2+) site.

It belongs to the anthranilate phosphoribosyltransferase family. Homodimer. Mg(2+) is required as a cofactor.

The catalysed reaction is N-(5-phospho-beta-D-ribosyl)anthranilate + diphosphate = 5-phospho-alpha-D-ribose 1-diphosphate + anthranilate. The protein operates within amino-acid biosynthesis; L-tryptophan biosynthesis; L-tryptophan from chorismate: step 2/5. Functionally, catalyzes the transfer of the phosphoribosyl group of 5-phosphorylribose-1-pyrophosphate (PRPP) to anthranilate to yield N-(5'-phosphoribosyl)-anthranilate (PRA). The chain is Anthranilate phosphoribosyltransferase from Methanococcus aeolicus (strain ATCC BAA-1280 / DSM 17508 / OCM 812 / Nankai-3).